The chain runs to 377 residues: UPF0754 membrane protein GK0639 (377 aa).

2 consecutive transmembrane segments (helical) span residues Leu7–Val27 and Tyr357–Leu377.

Belongs to the UPF0754 family.

The protein resides in the cell membrane. The sequence is that of UPF0754 membrane protein GK0639 from Geobacillus kaustophilus (strain HTA426).